The chain runs to 368 residues: Phosphoribosylaminoimidazole-succinocarboxamide synthase (368 aa).

It belongs to the SAICAR synthetase family.

The enzyme catalyses 5-amino-1-(5-phospho-D-ribosyl)imidazole-4-carboxylate + L-aspartate + ATP = (2S)-2-[5-amino-1-(5-phospho-beta-D-ribosyl)imidazole-4-carboxamido]succinate + ADP + phosphate + 2 H(+). Its pathway is purine metabolism; IMP biosynthesis via de novo pathway; 5-amino-1-(5-phospho-D-ribosyl)imidazole-4-carboxamide from 5-amino-1-(5-phospho-D-ribosyl)imidazole-4-carboxylate: step 1/2. The protein is Phosphoribosylaminoimidazole-succinocarboxamide synthase of Vibrio cholerae serotype O1 (strain ATCC 39315 / El Tor Inaba N16961).